A 278-amino-acid polypeptide reads, in one-letter code: Putative protein-disulfide oxidoreductase RF_0032 (278 aa).

Positions 1-18 are cleaved as a signal peptide; sequence MRSIFIVPIFLLFLSSCS. The interval 62–84 is disordered; sequence VPANDNNQTDEVSTPPSQEQKNP. Positions 65 to 81 are enriched in polar residues; that stretch reads NDNNQTDEVSTPPSQEQ. Positions 77–266 constitute a Thioredoxin domain; that stretch reads PSQEQKNPEI…ISTAVDKALE (190 aa). A disulfide bridge connects residues C119 and C122.

The protein belongs to the thioredoxin family. DsbA subfamily.

The protein resides in the periplasm. In terms of biological role, may be required for disulfide bond formation in some proteins. This chain is Putative protein-disulfide oxidoreductase RF_0032, found in Rickettsia felis (strain ATCC VR-1525 / URRWXCal2) (Rickettsia azadi).